Reading from the N-terminus, the 112-residue chain is T cell receptor alpha variable 9-2 (112 aa).

The N-terminal stretch at 1–20 (MNYSPGLVSLILLLLGRTRG) is a signal peptide. The Ig-like domain occupies 21–112 (DSVTQMEGPV…DSAVYFCALS (92 aa)). N-linked (GlcNAc...) asparagine glycosylation occurs at asparagine 41. Residues cysteine 42 and cysteine 109 are joined by a disulfide bond.

Alpha-beta TR is a heterodimer composed of an alpha and beta chain; disulfide-linked. The alpha-beta TR is associated with the transmembrane signaling CD3 coreceptor proteins to form the TR-CD3 (TcR or TCR). The assembly of alpha-beta TR heterodimers with CD3 occurs in the endoplasmic reticulum where a single alpha-beta TR heterodimer associates with one CD3D-CD3E heterodimer, one CD3G-CD3E heterodimer and one CD247 homodimer forming a stable octameric structure. CD3D-CD3E and CD3G-CD3E heterodimers preferentially associate with TR alpha and TR beta chains, respectively. The association of the CD247 homodimer is the last step of TcR assembly in the endoplasmic reticulum and is required for transport to the cell surface.

It localises to the cell membrane. V region of the variable domain of T cell receptor (TR) alpha chain that participates in the antigen recognition. Alpha-beta T cell receptors are antigen specific receptors which are essential to the immune response and are present on the cell surface of T lymphocytes. Recognize peptide-major histocompatibility (MH) (pMH) complexes that are displayed by antigen presenting cells (APC), a prerequisite for efficient T cell adaptive immunity against pathogens. Binding of alpha-beta TR to pMH complex initiates TR-CD3 clustering on the cell surface and intracellular activation of LCK that phosphorylates the ITAM motifs of CD3G, CD3D, CD3E and CD247 enabling the recruitment of ZAP70. In turn ZAP70 phosphorylates LAT, which recruits numerous signaling molecules to form the LAT signalosome. The LAT signalosome propagates signal branching to three major signaling pathways, the calcium, the mitogen-activated protein kinase (MAPK) kinase and the nuclear factor NF-kappa-B (NF-kB) pathways, leading to the mobilization of transcription factors that are critical for gene expression and essential for T cell growth and differentiation. The T cell repertoire is generated in the thymus, by V-(D)-J rearrangement. This repertoire is then shaped by intrathymic selection events to generate a peripheral T cell pool of self-MH restricted, non-autoaggressive T cells. Post-thymic interaction of alpha-beta TR with the pMH complexes shapes TR structural and functional avidity. This is T cell receptor alpha variable 9-2 from Homo sapiens (Human).